The chain runs to 246 residues: Probable transcriptional regulatory protein APJL_1171 (246 aa).

It belongs to the TACO1 family.

It localises to the cytoplasm. The polypeptide is Probable transcriptional regulatory protein APJL_1171 (Actinobacillus pleuropneumoniae serotype 3 (strain JL03)).